The chain runs to 501 residues: Lycopene beta cyclase, chloroplastic (501 aa).

The transit peptide at 1–48 (MDTLLKTPNKLDFFIPQFHGFERLCSNNPYHSRVRLGVKKRAIKIVSS) directs the protein to the chloroplast. Position 49 is an N-acetylvaline (Val49). Residue 85–113 (LAIVGGGPAGLAVAQQVSEAGLSVCSIDP) coordinates NAD(+).

The protein belongs to the lycopene cyclase family.

The protein resides in the plastid. The protein localises to the chloroplast. It carries out the reaction a carotenoid psi-end group = a carotenoid beta-end derivative. It functions in the pathway carotenoid biosynthesis; beta-carotene biosynthesis. Its pathway is carotenoid biosynthesis; beta-zeacarotene biosynthesis. Functionally, involved in carotenoid biosynthesis. Catalyzes the double cyclization reaction which converts lycopene to beta-carotene and neurosporene to beta-zeacarotene. Major lycopene beta-cyclase that does not seem to be involved in neoxanthin synthesis. Involved in salt tolerance improvement by increasing synthesis of carotenoids, which impairs reactive oxygen species (ROS) and protects the photosynthetic system under salt stress. This Arabidopsis thaliana (Mouse-ear cress) protein is Lycopene beta cyclase, chloroplastic.